Consider the following 555-residue polypeptide: 2-succinyl-5-enolpyruvyl-6-hydroxy-3-cyclohexene-1-carboxylate synthase (555 aa).

This sequence belongs to the TPP enzyme family. MenD subfamily. Homodimer. It depends on Mg(2+) as a cofactor. Requires Mn(2+) as cofactor. Thiamine diphosphate serves as cofactor.

The catalysed reaction is isochorismate + 2-oxoglutarate + H(+) = 5-enolpyruvoyl-6-hydroxy-2-succinyl-cyclohex-3-ene-1-carboxylate + CO2. Its pathway is quinol/quinone metabolism; 1,4-dihydroxy-2-naphthoate biosynthesis; 1,4-dihydroxy-2-naphthoate from chorismate: step 2/7. It functions in the pathway quinol/quinone metabolism; menaquinone biosynthesis. In terms of biological role, catalyzes the thiamine diphosphate-dependent decarboxylation of 2-oxoglutarate and the subsequent addition of the resulting succinic semialdehyde-thiamine pyrophosphate anion to isochorismate to yield 2-succinyl-5-enolpyruvyl-6-hydroxy-3-cyclohexene-1-carboxylate (SEPHCHC). This chain is 2-succinyl-5-enolpyruvyl-6-hydroxy-3-cyclohexene-1-carboxylate synthase, found in Kineococcus radiotolerans (strain ATCC BAA-149 / DSM 14245 / SRS30216).